The primary structure comprises 180 residues: RNA polymerase sigma-E factor (180 aa).

Positions 36–49 (DLLQTALARTYGRW) match the Polymerase core binding motif. The H-T-H motif DNA-binding region spans 130-149 (TEETAAALGMSAGTVKSTLH).

Belongs to the sigma-70 factor family. ECF subfamily.

It localises to the cytoplasm. In terms of biological role, sigma factors are initiation factors that promote the attachment of RNA polymerase to specific initiation sites and are then released. This sigma factor is required for the synthesis of the antibiotic actinomycin. This Streptomyces antibioticus protein is RNA polymerase sigma-E factor (sigE).